The chain runs to 380 residues: Tetratricopeptide repeat protein 19, mitochondrial (380 aa).

The transit peptide at 1–70 directs the protein to the mitochondrion; that stretch reads MFRLLSWSLG…AALAWFSRPA (70 aa). TPR repeat units lie at residues 136-169, 179-212, 237-270, 279-312, and 318-351; these read TYTY…LLGG, IEIS…LEEK, GMCL…SEEI, IVLM…ARQI, and HMVL…AKLK.

Belongs to the TTC19 family. Binds to the mature mitochondrial complex III dimer, after the incorporation of the Rieske protein UQCRFS1. Interacts with UQCRC1 and UQCRFS1. Interacts with ZFYVE26 and CHMP4B. Post-translationally, proteolytically cleaved by PARL.

The protein resides in the mitochondrion inner membrane. Its function is as follows. Required for the preservation of the structural and functional integrity of mitochondrial respiratory complex III by allowing the physiological turnover of the Rieske protein UQCRFS1. Involved in the clearance of UQCRFS1 N-terminal fragments, which are produced upon incorporation of UQCRFS1 into the complex III and whose presence is detrimental for its catalytic activity. This is Tetratricopeptide repeat protein 19, mitochondrial (TTC19) from Homo sapiens (Human).